A 925-amino-acid polypeptide reads, in one-letter code: Aspulvinone E synthetase melA (925 aa).

The interval 11 to 434 (ETAAARNGDG…GGRAKETIII (424 aa)) is adenylation (A) domain. The region spanning 564 to 644 (SPKNDFEKGL…ELAAALDNLY (81 aa)) is the Carrier domain. Serine 601 is modified (O-(pantetheine 4'-phosphoryl)serine). The tract at residues 663–923 (PLWLVHPGAG…KILRSALAER (261 aa)) is thioesterase (TE) domain.

The protein belongs to the NRP synthetase family.

The protein resides in the cytoplasm. It catalyses the reaction 2 3-(4-hydroxyphenyl)pyruvate + AH2 + 2 ATP + O2 = aspulvinone E + A + 2 AMP + CO2 + 2 diphosphate + H2O + H(+). In terms of biological role, nonribosomal peptide synthase; part of the gene cluster that mediates the biosynthesis of Asp-melanin, a pigment that confers resistance against UV light and hampers phagocytosis by soil amoeba. The nonribosomal peptide synthase melA converts 4-hydroxyphenylpyruvate (4-HPPA) to aspulvinone E. The tyrosinase tyrP then performs hydroxylations of both aromatic moieties of aspulvinone E. The product of tyrP is highly unstable, and, due to the high reactivity of methides and ortho-diquinones, the polymeric Asp-melanin forms spontaneously. In Aspergillus terreus (strain NIH 2624 / FGSC A1156), this protein is Aspulvinone E synthetase melA.